The primary structure comprises 343 residues: Probable dual-specificity RNA methyltransferase RlmN (343 aa).

The active-site Proton acceptor is the glutamate 92. The Radical SAM core domain occupies 98 to 328 (YHHGLTACIS…TTVRREMGAD (231 aa)). Cysteine 105 and cysteine 333 are oxidised to a cystine. [4Fe-4S] cluster-binding residues include cysteine 112, cysteine 116, and cysteine 119. S-adenosyl-L-methionine contacts are provided by residues 159–160 (GE), serine 191, 214–216 (SLH), and asparagine 290. Catalysis depends on cysteine 333, which acts as the S-methylcysteine intermediate.

This sequence belongs to the radical SAM superfamily. RlmN family. Requires [4Fe-4S] cluster as cofactor.

The protein resides in the cytoplasm. It carries out the reaction adenosine(2503) in 23S rRNA + 2 reduced [2Fe-2S]-[ferredoxin] + 2 S-adenosyl-L-methionine = 2-methyladenosine(2503) in 23S rRNA + 5'-deoxyadenosine + L-methionine + 2 oxidized [2Fe-2S]-[ferredoxin] + S-adenosyl-L-homocysteine. The catalysed reaction is adenosine(37) in tRNA + 2 reduced [2Fe-2S]-[ferredoxin] + 2 S-adenosyl-L-methionine = 2-methyladenosine(37) in tRNA + 5'-deoxyadenosine + L-methionine + 2 oxidized [2Fe-2S]-[ferredoxin] + S-adenosyl-L-homocysteine. Functionally, specifically methylates position 2 of adenine 2503 in 23S rRNA and position 2 of adenine 37 in tRNAs. The polypeptide is Probable dual-specificity RNA methyltransferase RlmN (Alkaliphilus oremlandii (strain OhILAs) (Clostridium oremlandii (strain OhILAs))).